A 1505-amino-acid polypeptide reads, in one-letter code: Synaptonemal complex protein 2 (1505 aa).

Positions 439–483 (EKSNLQKKLTNPLEPDNSSSQRDRKNSQDEITTPSRKKMSEASMI) are disordered. 2 positions are modified to phosphoserine: S457 and S465. Phosphothreonine is present on T471. A Phosphoserine modification is found at S494. T503 is subject to Phosphothreonine. 4 positions are modified to phosphoserine: S507, S516, S525, and S534. The disordered stretch occupies residues 536 to 571 (KSRQSDGRNRGNNRANHNKTATVQNKGHEHHESPDQ). Phosphothreonine occurs at positions 613 and 638. Phosphoserine is present on residues S651, S655, and S746. Residues 745–764 (KSPSRKSMRSHTKSRKELMS) are disordered. Positions 748-758 (SRKSMRSHTKS) are enriched in basic residues. S920 carries the phosphoserine modification. T922 carries the phosphothreonine modification. Disordered regions lie at residues 949–974 (YSRN…QPRS) and 1035–1080 (KEET…NGRE). Over residues 953 to 962 (KNTKKCKSIK) the composition is skewed to basic residues. S1121, S1123, S1130, S1146, S1150, S1162, S1165, and S1170 each carry phosphoserine. Phosphothreonine is present on T1174. The residue at position 1188 (S1188) is a Phosphoserine. Positions 1199–1239 (NSYSDVSSNSSEKLYMEPESPDSCENHVQSKREENHAASPF) are disordered. Residues 1200–1209 (SYSDVSSNSS) are compositionally biased toward low complexity. A phosphoserine mark is found at S1218 and S1221. Over residues 1222-1234 (CENHVQSKREENH) the composition is skewed to basic and acidic residues. 3 positions are modified to phosphoserine: S1237, S1280, and S1283. Residue T1318 is modified to Phosphothreonine. Residues 1384 to 1435 (ENIDKFQVTLLDELEKVEKDSQTLRDLEKEFVDIEEKIVHKMRAFHQSERER) adopt a coiled-coil conformation.

Belongs to the SYCP2 family. As to quaternary structure, component of the lateral elements of synaptonemal complexes. Interacts with TEX11. Heterodimer with SYCP3. Interacts with SYCP3, SMC1A and SMC3. Post-translationally, phosphorylated. As to expression, detected in spermatocytes and testis (at protein level). Spermatocytes and oocytes. Meiotic prophase cells.

The protein localises to the nucleus. It localises to the chromosome. Its function is as follows. Major component of the axial/lateral elements of synaptonemal complexes (SCS) during meiotic prophase. Plays a role in the assembly of synaptonemal complexes. Required for normal meiotic chromosome synapsis during oocyte and spermatocyte development and for normal male and female fertility. Required for insertion of SYCP3 into synaptonemal complexes. May be involved in the organization of chromatin by temporarily binding to DNA scaffold attachment regions. Requires SYCP3, but not SYCP1, in order to be incorporated into the axial/lateral elements. The sequence is that of Synaptonemal complex protein 2 (Sycp2) from Rattus norvegicus (Rat).